The chain runs to 199 residues: Guanylate kinase (199 aa).

One can recognise a Guanylate kinase-like domain in the interval 20-198; that stretch reads GKLIVLTGPS…ALQAIEVALF (179 aa). 27–34 is a binding site for ATP; the sequence is GPSGVGKG.

This sequence belongs to the guanylate kinase family.

It is found in the cytoplasm. The enzyme catalyses GMP + ATP = GDP + ADP. Its function is as follows. Essential for recycling GMP and indirectly, cGMP. The sequence is that of Guanylate kinase from Trichormus variabilis (strain ATCC 29413 / PCC 7937) (Anabaena variabilis).